We begin with the raw amino-acid sequence, 32 residues long: Basic phospholipase A2 (32 aa).

Positions 26, 28, and 30 each coordinate Ca(2+).

This sequence belongs to the phospholipase A2 family. Group II subfamily. Ca(2+) is required as a cofactor. As to expression, expressed by the venom gland.

The protein localises to the secreted. The catalysed reaction is a 1,2-diacyl-sn-glycero-3-phosphocholine + H2O = a 1-acyl-sn-glycero-3-phosphocholine + a fatty acid + H(+). In terms of biological role, snake venom phospholipase A2 (PLA2) that inhibits neuromuscular transmission by blocking acetylcholine release from the nerve termini. PLA2 catalyzes the calcium-dependent hydrolysis of the 2-acyl groups in 3-sn-phosphoglycerides. The protein is Basic phospholipase A2 of Gloydius halys (Chinese water mocassin).